The following is a 231-amino-acid chain: PX domain-containing protein 1 (231 aa).

A PX domain is found at 1–134 (MASAVFEGTS…TFFERSPLDQ (134 aa)).

The sequence is that of PX domain-containing protein 1 (PXDC1) from Bos taurus (Bovine).